The following is a 287-amino-acid chain: Large ribosomal subunit protein uL2 (287 aa).

The tract at residues 220 to 287 is disordered; sequence VRGSVMNPCD…SKRSRGGRDS (68 aa). The span at 271-287 shows a compositional bias: basic residues; sequence VRRRRRISKRSRGGRDS.

This sequence belongs to the universal ribosomal protein uL2 family. Part of the 50S ribosomal subunit. Forms a bridge to the 30S subunit in the 70S ribosome.

Functionally, one of the primary rRNA binding proteins. Required for association of the 30S and 50S subunits to form the 70S ribosome, for tRNA binding and peptide bond formation. It has been suggested to have peptidyltransferase activity; this is somewhat controversial. Makes several contacts with the 16S rRNA in the 70S ribosome. The chain is Large ribosomal subunit protein uL2 from Prochlorococcus marinus (strain MIT 9515).